The following is a 227-amino-acid chain: 7-cyano-7-deazaguanine synthase (227 aa).

7-17 (VSGGMDSLVAT) serves as a coordination point for ATP. Residues cysteine 187, cysteine 195, cysteine 198, and cysteine 201 each contribute to the Zn(2+) site.

This sequence belongs to the QueC family. The cofactor is Zn(2+).

The catalysed reaction is 7-carboxy-7-deazaguanine + NH4(+) + ATP = 7-cyano-7-deazaguanine + ADP + phosphate + H2O + H(+). The protein operates within purine metabolism; 7-cyano-7-deazaguanine biosynthesis. In terms of biological role, catalyzes the ATP-dependent conversion of 7-carboxy-7-deazaguanine (CDG) to 7-cyano-7-deazaguanine (preQ(0)). This chain is 7-cyano-7-deazaguanine synthase, found in Chlorobaculum parvum (strain DSM 263 / NCIMB 8327) (Chlorobium vibrioforme subsp. thiosulfatophilum).